The primary structure comprises 490 residues: MSRMAEQQLYIHGGYTSATSGRTFETINPANGNVLATVQAAGREDVDRAVKSAQQGQKIWAAMTAMERSRILRRAVDILRERNDELAKLETLDTGKAYSETSTVDIVTGADVLEYYAGLIPSLEGSQIPLRETSFVYTRREPLGVVAGIGAWNYPIQIALWKSAPALAAGNAMIFKPSEVTPLTALKLAEIYSEAGLPDGVFNVLPGVGAETGQYLTEHPGIAKVSFTGGVASGKKVMANSAASSLKEVTMELGGKSPLIVFDDADLDLAADIAMMANFFSSGQVCTNGTRVFVPAKCNAAFEQKILARVERIRAGDVFDPQTNFGPLVSFPHRDNVLRYIAKGKEEGARVLCGGDVLKGDGLDNGAWVAPTVFTDCSDEMTIVREEIFGPVMSILTYESEDEVIRRANDTDYGLAAGIVTADLNRAHRVIHQLEAGICWINTWGESPAEMPVGGYKHSGIGRENGVMTLQSYTQVKSIQVEMAKFQSIF.

Threonine 26, isoleucine 27, and aspartate 93 together coordinate K(+). Residue 150 to 152 (GAW) participates in NAD(+) binding. The active-site Charge relay system is lysine 162. 176–179 (KPSE) contributes to the NAD(+) binding site. K(+) is bound at residue valine 180. 230–233 (GVAS) is an NAD(+) binding site. Leucine 246 is a K(+) binding site. Catalysis depends on glutamate 252, which acts as the Proton acceptor. NAD(+) contacts are provided by glycine 254, cysteine 286, and glutamate 387. Cysteine 286 serves as the catalytic Nucleophile. The residue at position 286 (cysteine 286) is a Cysteine sulfenic acid (-SOH). Lysine 457 and glycine 460 together coordinate K(+). Glutamate 464 (charge relay system) is an active-site residue.

Belongs to the aldehyde dehydrogenase family. Dimer of dimers. The cofactor is K(+).

It catalyses the reaction betaine aldehyde + NAD(+) + H2O = glycine betaine + NADH + 2 H(+). It functions in the pathway amine and polyamine biosynthesis; betaine biosynthesis via choline pathway; betaine from betaine aldehyde: step 1/1. In terms of biological role, involved in the biosynthesis of the osmoprotectant glycine betaine. Catalyzes the irreversible oxidation of betaine aldehyde to the corresponding acid. This is Betaine aldehyde dehydrogenase from Escherichia coli O157:H7.